Consider the following 279-residue polypeptide: Formamidopyrimidine-DNA glycosylase (279 aa).

Proline 2 acts as the Schiff-base intermediate with DNA in catalysis. The Proton donor role is filled by glutamate 3. The active-site Proton donor; for beta-elimination activity is lysine 57. DNA is bound by residues histidine 90, arginine 109, and arginine 151. The FPG-type zinc-finger motif lies at 236–270 (FVYGRTGQPCRVCQTPIAVLRLGQRSTFYCPACQQ). Residue arginine 260 is the Proton donor; for delta-elimination activity of the active site.

This sequence belongs to the FPG family. In terms of assembly, monomer. Requires Zn(2+) as cofactor.

The catalysed reaction is Hydrolysis of DNA containing ring-opened 7-methylguanine residues, releasing 2,6-diamino-4-hydroxy-5-(N-methyl)formamidopyrimidine.. It catalyses the reaction 2'-deoxyribonucleotide-(2'-deoxyribose 5'-phosphate)-2'-deoxyribonucleotide-DNA = a 3'-end 2'-deoxyribonucleotide-(2,3-dehydro-2,3-deoxyribose 5'-phosphate)-DNA + a 5'-end 5'-phospho-2'-deoxyribonucleoside-DNA + H(+). In terms of biological role, involved in base excision repair of DNA damaged by oxidation or by mutagenic agents. Acts as a DNA glycosylase that recognizes and removes damaged bases. Has a preference for oxidized purines, such as 7,8-dihydro-8-oxoguanine (8-oxoG). Has AP (apurinic/apyrimidinic) lyase activity and introduces nicks in the DNA strand. Cleaves the DNA backbone by beta-delta elimination to generate a single-strand break at the site of the removed base with both 3'- and 5'-phosphates. In Methylobacillus flagellatus (strain ATCC 51484 / DSM 6875 / VKM B-1610 / KT), this protein is Formamidopyrimidine-DNA glycosylase.